Consider the following 1612-residue polypeptide: Roundabout homolog 1 (1612 aa).

The first 19 residues, 1–19 (MIAEPAHFYLFGLICLCSG), serve as a signal peptide directing secretion. The Extracellular segment spans residues 20 to 858 (SRLRQEDFPP…QQISDVVRQP (839 aa)). Ig-like C2-type domains follow at residues 29–125 (PRIV…ASLE), 131–218 (DDFR…AELT), 223–307 (PSFV…ATLT), 312–407 (PHFV…LEVT), and 416–502 (PVIR…AYIE). Cysteines 50 and 108 form a disulfide. Residue Asn121 is glycosylated (N-linked (GlcNAc...) asparagine). Intrachain disulfides connect Cys152–Cys201, Cys244–Cys291, and Cys333–Cys389. A glycan (N-linked (GlcNAc...) asparagine) is linked at Asn424. Residues Cys437 and Cys486 are joined by a disulfide bond. Fibronectin type-III domains lie at 524-618 (APSK…TQDV), 637-734 (VVLH…TLEE), and 739-835 (PPRS…LDSH). 3 N-linked (GlcNAc...) asparagine glycosylation sites follow: Asn751, Asn781, and Asn788. The helical transmembrane segment at 859–879 (AFIAGIGAACWIILMVFSIWL) threads the bilayer. Residues 880–1612 (YRHRKKRNGL…NNEELEETES (733 aa)) lie on the Cytoplasmic side of the membrane. Ser901 bears the Phosphoserine mark. Thr909 carries the phosphothreonine modification. Tyr999 bears the Phosphotyrosine mark. A Phosphoserine modification is found at Ser1016. Phosphotyrosine is present on Tyr1034. Positions 1045–1068 (SNNMNNGAGDSSEKHWKPPGQQKP) are disordered. Tyr1075 carries the post-translational modification Phosphotyrosine. Disordered regions lie at residues 1088–1298 (RAND…ADME), 1313–1358 (EQTP…DGSF), and 1381–1612 (RRQM…ETES). The span at 1098-1107 (PYNQSYDQNT) shows a compositional bias: polar residues. Low complexity predominate over residues 1108 to 1124 (GGSYNSSDRGSSTSGSQ). Residues 1147 to 1157 (LPPPPAHPPPH) are compositionally biased toward pro residues. Thr1201 is modified (phosphothreonine). Polar residues predominate over residues 1216 to 1230 (YSHQSTATLTPSPQE). Residues 1242–1254 (DLGHMPHPPDRRR) are compositionally biased toward basic and acidic residues. Residues 1257-1268 (VSPPPPPRPISP) show a composition bias toward pro residues. Position 1258 is a phosphoserine (Ser1258). Acidic residues predominate over residues 1283-1297 (MDTDAPEEEEDEADM). Low complexity predominate over residues 1345-1358 (SSGRSSVSSSDGSF). Positions 1399–1412 (PRPTSPVSTDSNMS) are enriched in polar residues. Over residues 1420–1431 (RPAKKQKHQPGH) the composition is skewed to basic residues. Positions 1441–1451 (LPPPPVPPPAI) are enriched in pro residues. 2 stretches are compositionally biased toward basic and acidic residues: residues 1477–1502 (ARTDRSSDRKGGSYKGREALDGRQVT) and 1510–1534 (DPREAQEQPNDGKGRGTRQPKRDLP). A compositionally biased stretch (polar residues) spans 1553–1562 (FPTSNNPRDP). The segment covering 1563–1575 (SSSSSMSSRGSGS) has biased composition (low complexity). Residues 1603-1612 (NNEELEETES) are compositionally biased toward acidic residues.

It belongs to the immunoglobulin superfamily. ROBO family. Homodimer. Dimerization is mediated by the extracellular domain and is independent of SLIT liganding. Interacts with SLIT1 Interacts with SLIT2. Interacts with FLRT3. Interacts with MYO9B (via Rho-GAP domain). Ubiquitinated. May be deubiquitinated by USP33. As to expression, detected in embryonic thalamus neurons (at protein level). Expressed in embryonal spinal cord. Expressed in embryonal lung, and in adult lung bronchial epithelial cells of large proximal airways.

Its subcellular location is the cell membrane. It is found in the cell projection. The protein localises to the axon. The protein resides in the endoplasmic reticulum-Golgi intermediate compartment membrane. Its function is as follows. Receptor for SLIT1 and SLIT2 that mediates cellular responses to molecular guidance cues in cellular migration, including axonal navigation at the ventral midline of the neural tube and projection of axons to different regions during neuronal development. Interaction with the intracellular domain of FLRT3 mediates axon attraction towards cells expressing NTN1. In axon growth cones, the silencing of the attractive effect of NTN1 by SLIT2 may require the formation of a ROBO1-DCC complex. Plays a role in the regulation of cell migration via its interaction with MYO9B; inhibits MYO9B-mediated stimulation of RHOA GTPase activity, and thereby leads to increased levels of active, GTP-bound RHOA. May be required for lung development. This Mus musculus (Mouse) protein is Roundabout homolog 1 (Robo1).